The sequence spans 483 residues: 6-phosphogluconate dehydrogenase, decarboxylating (483 aa).

Residues 10–15 (GLAVMG) and 33–35 (NRT) each bind NADP(+). Lysine 38 is modified (N6-acetyllysine). At serine 57 the chain carries Phosphoserine. An N6-acetyllysine modification is found at lysine 59. Residues 75–77 (VKA) and asparagine 103 each bind NADP(+). Residues asparagine 103 and 129-131 (SGG) contribute to the substrate site. Position 129 is a phosphoserine (serine 129). The active-site Proton acceptor is lysine 184. Substrate is bound at residue 187 to 188 (HN). The Proton donor role is filled by glutamate 191. 5 residues coordinate substrate: tyrosine 192, lysine 261, arginine 288, arginine 447, and histidine 453. 478 to 481 (SSSY) provides a ligand contact to NADP(+).

This sequence belongs to the 6-phosphogluconate dehydrogenase family. In terms of assembly, homodimer.

It is found in the cytoplasm. The enzyme catalyses 6-phospho-D-gluconate + NADP(+) = D-ribulose 5-phosphate + CO2 + NADPH. The protein operates within carbohydrate degradation; pentose phosphate pathway; D-ribulose 5-phosphate from D-glucose 6-phosphate (oxidative stage): step 3/3. In terms of biological role, catalyzes the oxidative decarboxylation of 6-phosphogluconate to ribulose 5-phosphate and CO(2), with concomitant reduction of NADP to NADPH. This chain is 6-phosphogluconate dehydrogenase, decarboxylating (Pgd), found in Mus musculus (Mouse).